The following is a 352-amino-acid chain: Heavy metal-associated isoprenylated plant protein 36 (352 aa).

Residues 29–92 (YTTWVLRVSI…KIMKAGRHAE (64 aa)) enclose the HMA domain. A metal cation-binding residues include cysteine 40 and cysteine 43. Disordered regions lie at residues 96–150 (TSME…GNFD), 162–211 (QLQP…GPPE), and 229–252 (PHLH…RHHP). The segment covering 97-107 (SMENNINNDCN) has biased composition (polar residues). A compositionally biased stretch (acidic residues) spans 118 to 128 (ETSGDEDDDEN). The segment covering 133–148 (NGGGDVGGGGGGGGGN) has biased composition (gly residues). Residues 172–183 (KKKKKKKKKKKS) are compositionally biased toward basic residues. Residues 192–203 (EGGGGGGGGGGP) show a composition bias toward gly residues. Cysteine 349 bears the Cysteine methyl ester mark. The S-farnesyl cysteine moiety is linked to residue cysteine 349. Residues 350-352 (CVM) constitute a propeptide, removed in mature form.

Belongs to the HIPP family.

Heavy-metal-binding protein. This chain is Heavy metal-associated isoprenylated plant protein 36, found in Arabidopsis thaliana (Mouse-ear cress).